Here is a 559-residue protein sequence, read N- to C-terminus: Non-homologous end joining factor IFFO1 (559 aa).

The tract at residues 21–57 (GPLGDSLGGDHFAGGGDLPPAPLSPAGPAAYSPPGPG) is disordered. The segment covering 39-57 (PPAPLSPAGPAAYSPPGPG) has biased composition (pro residues). The interval 65-116 (ALRNDLGSNINVLKTLNLRFRCFLAKVHELERRNRLLEKQLQQALEEGKQGR) is LMNA binding. One can recognise an IF rod domain in the interval 73 to 526 (NINVLKTLNL…RLITQSGDRK (454 aa)). The stretch at 85-117 (RCFLAKVHELERRNRLLEKQLQQALEEGKQGRR) forms a coiled coil. The interval 158–187 (SPARSPAGPLAPSAASLSSSSTSTSTTYSS) is disordered. The stretch at 237-301 (EIRALYNVLA…LKVEQLKAEL (65 aa)) forms a coiled coil. Positions 360 to 394 (SMGGRKRERKAAVEEDTSLSESEGPRQPDGDEEES) are disordered. The XCCR4 binding. Required for localization to the double-strand breaks (DSBs) stretch occupies residues 450–525 (EQEDSLEKVI…RRLITQSGDR (76 aa)). The stretch at 455 to 501 (LEKVIKDTESLFKTREKEYQETIDQIELELATAKNDMNRHLHEYMEM) forms a coiled coil. The segment at 520-559 (TQSGDRKSPAFTAVPLSDPPPPPSEAEDSDRDVSSDSSMR) is disordered. The segment covering 550-559 (RDVSSDSSMR) has biased composition (basic and acidic residues).

The protein belongs to the intermediate filament family. Forms a heterotetramer with XRCC4. The interaction with XRCC4 is direct, involves LIG4-free XRCC4 and leads to relocalization of IFFO1 at the double-strand break (DSB) sites. Interacts with LMNA; the interaction forms an interior nucleoskeleton and the recruitment to DNA double-strand breaks. In terms of tissue distribution, ubiquitously expressed.

It is found in the nucleus. The protein resides in the nucleoplasm. Its subcellular location is the nucleus inner membrane. It localises to the nucleus matrix. Its function is as follows. Nuclear matrix protein involved in the immobilization of broken DNA ends and the suppression of chromosome translocation during DNA double-strand breaks (DSBs). Interacts with the nuclear lamina component LMNA, resulting in the formation of a nucleoskeleton that relocalizes to the DSB sites in a XRCC4-dependent manner and promotes the immobilization of the broken ends, thereby preventing chromosome translocation. Acts as a scaffold that allows the DNA repair protein XRCC4 and LMNA to assemble into a complex at the DSB sites. The polypeptide is Non-homologous end joining factor IFFO1 (Homo sapiens (Human)).